We begin with the raw amino-acid sequence, 400 residues long: 1-deoxy-D-xylulose 5-phosphate reductoisomerase (400 aa).

Residues T10, G11, S12, I13, G36, N38, and N124 each coordinate NADPH. K125 contributes to the 1-deoxy-D-xylulose 5-phosphate binding site. E126 lines the NADPH pocket. D150 is a binding site for Mn(2+). 4 residues coordinate 1-deoxy-D-xylulose 5-phosphate: S151, E152, S186, and H209. Residue E152 participates in Mn(2+) binding. G215 is a binding site for NADPH. Residues S222, N227, K228, and E231 each contribute to the 1-deoxy-D-xylulose 5-phosphate site. Residue E231 participates in Mn(2+) binding.

The protein belongs to the DXR family. The cofactor is Mg(2+). Mn(2+) serves as cofactor.

The catalysed reaction is 2-C-methyl-D-erythritol 4-phosphate + NADP(+) = 1-deoxy-D-xylulose 5-phosphate + NADPH + H(+). It functions in the pathway isoprenoid biosynthesis; isopentenyl diphosphate biosynthesis via DXP pathway; isopentenyl diphosphate from 1-deoxy-D-xylulose 5-phosphate: step 1/6. Functionally, catalyzes the NADPH-dependent rearrangement and reduction of 1-deoxy-D-xylulose-5-phosphate (DXP) to 2-C-methyl-D-erythritol 4-phosphate (MEP). This Aliivibrio fischeri (strain ATCC 700601 / ES114) (Vibrio fischeri) protein is 1-deoxy-D-xylulose 5-phosphate reductoisomerase.